Reading from the N-terminus, the 892-residue chain is MTRRRSRPSGGAGRRERARAAGLQKPQAPEPQPPPPSLEAGAGAGPPEVPAELDCDGPREEEEPKLAPGPQVPPTSSQSVQTCCLLCHRERKGWEEGPSQNGLVLQGEKLPPDFMPKLVKNLLGEMPLWVCQSCRKSMEEEERQTGGDHAVAISLSHTSCKSQSCGGDSHSSSSSSSSSSSSSSSCHGNSGDWDPSSFLSAHKLSGLWNSPHSSGAVPGSSLGSPPAILGEAFPVSEHHQHSDLTAPPNSPTGPPPHPASLIPSHPGSFSSASYPPPLPTTPVAPFPAQASECPMAAATATHPSGPCQSPHPPSTSMPLLKMPPPLSGCSHPCSGHCSGHCGGPLLPPPSSQPLPSTHSRDPGCKGHKFAHSGLACEADEGLGEEEDSSSERSSCTSSSTHPRDGKFCDCCYCEFFGHNAPLAAPTSRNYTEIREKLRSRLTRRKEELPMKGGTLGGIPGEPAVDHRDVDELLEFINSTEPKVPNSARAAKRARHKLKKKEKEKARLATEALKQVNRVSGSQEPRPARERLLEWPDQELDRVNSFLSSRLQEIKSTVKDSLCASLSMCELSVESSGFKEGTVEAQTLTPSDLSGSSQKRPDINLDLSPLTLGSPQSHTLQAPSEPVPPWAERRDPHPPPWTEVRGPPPGIPENGLVRRLNTVPNLSRVIWVKTPKPGNPSSEESSKEVPSCKQELSEPVATGGKPKKSKRQGSQAKKTLASPAPWSPANLEASGAKSQVSSPKQPSKGSEPAKVGSGAEPGEGSPGSRPGPIQADSPKTDKKGSSWQNWPGGAKARTLEQESEQTPGPARPQSLSQGKGRSRRSRNKQEKSASSLDDVFLPKDLDGVEMDETDREVEYFKRFCLDSAKQTRQKVAVNWTNFSLKKTTPSTAQ.

4 disordered regions span residues 1–78 (MTRR…TSSQ), 164–192 (SCGG…NSGD), 237–321 (EHHQ…PLLK), and 379–403 (DEGL…THPR). Residues 28–37 (APEPQPPPPS) are compositionally biased toward pro residues. Residues 56 to 65 (DGPREEEEPK) are compositionally biased toward basic and acidic residues. The segment covering 169–185 (SHSSSSSSSSSSSSSSS) has biased composition (low complexity). 3 stretches are compositionally biased toward pro residues: residues 248–258 (PNSPTGPPPHP), 274–285 (YPPPLPTTPVAP), and 309–321 (SPHP…PLLK). Residues 379–388 (DEGLGEEEDS) show a composition bias toward acidic residues. Positions 391–400 (ERSSCTSSST) are enriched in low complexity. Positions 485–517 (NSARAAKRARHKLKKKEKEKARLATEALKQVNR) form a coiled coil. 2 stretches are compositionally biased toward polar residues: residues 587–597 (LTPSDLSGSSQ) and 610–621 (TLGSPQSHTLQA). Disordered regions lie at residues 587-655 (LTPS…ENGL) and 671-837 (VKTP…SLDD). Residues 637-650 (PPPWTEVRGPPPGI) are compositionally biased toward pro residues. Low complexity predominate over residues 736-757 (KSQVSSPKQPSKGSEPAKVGSG). Phosphoserine occurs at positions 764, 776, and 882.

Belongs to the FAM193 family.

Its subcellular location is the cytoplasm. The protein localises to the nucleus. The protein is Protein FAM193B (Fam193b) of Mus musculus (Mouse).